A 92-amino-acid polypeptide reads, in one-letter code: Small ribosomal subunit protein uS19c (92 aa).

The protein belongs to the universal ribosomal protein uS19 family.

Its subcellular location is the plastid. It localises to the chloroplast. In terms of biological role, protein S19 forms a complex with S13 that binds strongly to the 16S ribosomal RNA. The sequence is that of Small ribosomal subunit protein uS19c from Staurastrum punctulatum (Green alga).